Here is a 477-residue protein sequence, read N- to C-terminus: Glutamyl-tRNA(Gln) amidotransferase subunit A (477 aa).

Residues Lys-68 and Ser-143 each act as charge relay system in the active site. Ser-167 serves as the catalytic Acyl-ester intermediate.

The protein belongs to the amidase family. GatA subfamily. Heterotrimer of A, B and C subunits.

The enzyme catalyses L-glutamyl-tRNA(Gln) + L-glutamine + ATP + H2O = L-glutaminyl-tRNA(Gln) + L-glutamate + ADP + phosphate + H(+). Its function is as follows. Allows the formation of correctly charged Gln-tRNA(Gln) through the transamidation of misacylated Glu-tRNA(Gln) in organisms which lack glutaminyl-tRNA synthetase. The reaction takes place in the presence of glutamine and ATP through an activated gamma-phospho-Glu-tRNA(Gln). The polypeptide is Glutamyl-tRNA(Gln) amidotransferase subunit A (gatA) (Mycoplasma genitalium (strain ATCC 33530 / DSM 19775 / NCTC 10195 / G37) (Mycoplasmoides genitalium)).